A 186-amino-acid chain; its full sequence is Elongation factor P (186 aa).

The protein belongs to the elongation factor P family.

It localises to the cytoplasm. Its pathway is protein biosynthesis; polypeptide chain elongation. In terms of biological role, involved in peptide bond synthesis. Stimulates efficient translation and peptide-bond synthesis on native or reconstituted 70S ribosomes in vitro. Probably functions indirectly by altering the affinity of the ribosome for aminoacyl-tRNA, thus increasing their reactivity as acceptors for peptidyl transferase. The chain is Elongation factor P from Shewanella frigidimarina (strain NCIMB 400).